Consider the following 486-residue polypeptide: Probable glycine dehydrogenase (decarboxylating) subunit 2 (486 aa).

Residue lysine 273 is modified to N6-(pyridoxal phosphate)lysine.

Belongs to the GcvP family. C-terminal subunit subfamily. In terms of assembly, the glycine cleavage system is composed of four proteins: P, T, L and H. In this organism, the P 'protein' is a heterodimer of two subunits. It depends on pyridoxal 5'-phosphate as a cofactor.

It catalyses the reaction N(6)-[(R)-lipoyl]-L-lysyl-[glycine-cleavage complex H protein] + glycine + H(+) = N(6)-[(R)-S(8)-aminomethyldihydrolipoyl]-L-lysyl-[glycine-cleavage complex H protein] + CO2. The glycine cleavage system catalyzes the degradation of glycine. The P protein binds the alpha-amino group of glycine through its pyridoxal phosphate cofactor; CO(2) is released and the remaining methylamine moiety is then transferred to the lipoamide cofactor of the H protein. The polypeptide is Probable glycine dehydrogenase (decarboxylating) subunit 2 (Alkaliphilus oremlandii (strain OhILAs) (Clostridium oremlandii (strain OhILAs))).